A 95-amino-acid chain; its full sequence is Large ribosomal subunit protein uL23 (95 aa).

It belongs to the universal ribosomal protein uL23 family. Part of the 50S ribosomal subunit. Contacts protein L29, and trigger factor when it is bound to the ribosome.

One of the early assembly proteins it binds 23S rRNA. One of the proteins that surrounds the polypeptide exit tunnel on the outside of the ribosome. Forms the main docking site for trigger factor binding to the ribosome. This chain is Large ribosomal subunit protein uL23, found in Anoxybacillus flavithermus (strain DSM 21510 / WK1).